A 332-amino-acid polypeptide reads, in one-letter code: Endo-1,4-beta-xylanase B (332 aa).

The GH10 domain occupies 2-331; sequence STEIPSLSAS…KDSFWRIIGQ (330 aa). Glu-134 (proton donor) is an active-site residue. Glu-241 acts as the Nucleophile in catalysis.

It belongs to the glycosyl hydrolase 10 (cellulase F) family. Cytoplasmic xylanase subfamily.

It is found in the cytoplasm. It carries out the reaction Endohydrolysis of (1-&gt;4)-beta-D-xylosidic linkages in xylans.. The protein operates within glycan degradation; xylan degradation. Its activity is regulated as follows. Completely inhibited by Ag(2+), Cu(2+), Hg(2+), Mn(2+), Pb(2+) and Sn(2+). Strongly inhibited by Fe(2+) and Zn(2+). Co(2+) and Ni(2+) cause little inhibition while Ca(2+) and Mg(2+) do not affect enzyme activity, and Ba(2+) produces a small stimulating effect. Irreversibly inactivated by SDS in vitro. In terms of biological role, plays a role in plant xylan biodegradation, probably via the hydrolysis of short xylooligosaccharides resulting from extracellular xylan hydrolysis, once they have been transported inside cells. Shows similar activity on xylans of different rate of arabinose or methylglucuronic substitution. Also displays high activity on aryl-xylosides. Is active on xylotetraose and xylotriose, but does not hydrolyze xylobiose, indicating that XynB is a xylanase and not a beta-xylosidase. In Paenibacillus barcinonensis, this protein is Endo-1,4-beta-xylanase B (xynB).